The primary structure comprises 758 residues: Polyribonucleotide nucleotidyltransferase (758 aa).

Aspartate 488 and aspartate 494 together coordinate Mg(2+). In terms of domain architecture, KH spans 555-614 (PKLYTMKINPEKIRDVIGKGGAVIRALTEETGTQINIDEDGTITIASTDSAKADEAKRRI). Residues 624–692 (GKIYEGPVVK…EKGRVKLSMR (69 aa)) form the S1 motif domain. The interval 692–758 (RALLDRPMGD…AGEHSGQMDA (67 aa)) is disordered. Basic and acidic residues predominate over residues 707 to 735 (PAERGERGDRGDRGDRPERGERRERREPA). The segment covering 736–745 (GADQQQQQQQ) has biased composition (low complexity).

It belongs to the polyribonucleotide nucleotidyltransferase family. Requires Mg(2+) as cofactor.

It is found in the cytoplasm. The catalysed reaction is RNA(n+1) + phosphate = RNA(n) + a ribonucleoside 5'-diphosphate. Functionally, involved in mRNA degradation. Catalyzes the phosphorolysis of single-stranded polyribonucleotides processively in the 3'- to 5'-direction. This chain is Polyribonucleotide nucleotidyltransferase, found in Paracidovorax citrulli (strain AAC00-1) (Acidovorax citrulli).